The sequence spans 505 residues: L-carnitine/gamma-butyrobetaine antiporter (505 aa).

12 helical membrane passes run 10 to 30 (IEPK…WLTV), 51 to 71 (WGWA…WLVF), 92 to 112 (IFMM…SIEI), 143 to 163 (GPLP…FFFV), 195 to 215 (FYLV…TPLV), 231 to 251 (LDAI…ACGL), 263 to 283 (SYLS…SFIM), 316 to 336 (WTVF…IFLA), 347 to 367 (LCFG…TVLG), 403 to 423 (LSTA…VTLI), 446 to 466 (LLVR…LLAL), and 475 to 495 (AIIA…LSFI).

The protein belongs to the BCCT transporter (TC 2.A.15) family. CaiT subfamily. Homotrimer.

Its subcellular location is the cell inner membrane. The enzyme catalyses 4-(trimethylamino)butanoate(in) + (R)-carnitine(out) = 4-(trimethylamino)butanoate(out) + (R)-carnitine(in). It functions in the pathway amine and polyamine metabolism; carnitine metabolism. Its function is as follows. Catalyzes the exchange of L-carnitine for gamma-butyrobetaine. The polypeptide is L-carnitine/gamma-butyrobetaine antiporter (Salmonella choleraesuis (strain SC-B67)).